The primary structure comprises 61 residues: Conotoxin Vn5.3 (61 aa).

A signal peptide spans 1–19 (MRCLPVFVILLLLIASAPG). The propeptide occupies 20-50 (VDVQPKTKYYVPRASRRDFAKKTPKRLSKLR).

It belongs to the conotoxin T superfamily. In terms of processing, contains 2 disulfide bonds that can be either 'C1-C3, C2-C4' or 'C1-C4, C2-C3', since these disulfide connectivities have been observed for conotoxins with cysteine framework V (for examples, see AC P0DQQ7 and AC P81755). As to expression, expressed by the venom duct.

It is found in the secreted. The polypeptide is Conotoxin Vn5.3 (Conus ventricosus (Mediterranean cone)).